Here is a 126-residue protein sequence, read N- to C-terminus: Integrin alpha-M (126 aa).

Residues asparagine 25, asparagine 78, and asparagine 106 are each glycosylated (N-linked (GlcNAc...) asparagine).

The protein belongs to the integrin alpha chain family. In terms of assembly, heterodimer of an alpha and a beta chain. ITGAM associates with ITGB2. Found in a complex with CD177 and ITGB2/CD18. Interacts with JAM3. Interacts with THBD. Interacts with TMEM268; this interaction inhibits ITGAM degradation via the endosome-lysosome pathway.

The protein resides in the cell membrane. The protein localises to the membrane raft. Functionally, integrin ITGAM/ITGB2 is implicated in various adhesive interactions of monocytes, macrophages and granulocytes as well as in mediating the uptake of complement-coated particles. It is identical with CR-3, the receptor for the iC3b fragment of the third complement component. It probably recognizes the R-G-D peptide in C3b. Integrin ITGAM/ITGB2 is also a receptor for fibrinogen, factor X and ICAM1. It recognizes P1 and P2 peptides of fibrinogen gamma chain. Regulates neutrophil migration. In association with beta subunit ITGB2/CD18, required for CD177-PRTN3-mediated activation of TNF primed neutrophils. May regulate phagocytosis-induced apoptosis in extravasated neutrophils. May play a role in mast cell development. Required with TYROBP/DAP12 in microglia to control production of microglial superoxide ions which promote the neuronal apoptosis that occurs during brain development. In Cavia porcellus (Guinea pig), this protein is Integrin alpha-M (ITGAM).